The chain runs to 259 residues: Imidazole glycerol phosphate synthase subunit HisF (259 aa).

Catalysis depends on residues Asp-11 and Asp-130.

It belongs to the HisA/HisF family. In terms of assembly, heterodimer of HisH and HisF.

Its subcellular location is the cytoplasm. The enzyme catalyses 5-[(5-phospho-1-deoxy-D-ribulos-1-ylimino)methylamino]-1-(5-phospho-beta-D-ribosyl)imidazole-4-carboxamide + L-glutamine = D-erythro-1-(imidazol-4-yl)glycerol 3-phosphate + 5-amino-1-(5-phospho-beta-D-ribosyl)imidazole-4-carboxamide + L-glutamate + H(+). Its pathway is amino-acid biosynthesis; L-histidine biosynthesis; L-histidine from 5-phospho-alpha-D-ribose 1-diphosphate: step 5/9. In terms of biological role, IGPS catalyzes the conversion of PRFAR and glutamine to IGP, AICAR and glutamate. The HisF subunit catalyzes the cyclization activity that produces IGP and AICAR from PRFAR using the ammonia provided by the HisH subunit. This is Imidazole glycerol phosphate synthase subunit HisF from Shewanella amazonensis (strain ATCC BAA-1098 / SB2B).